The chain runs to 420 residues: Caspase-12 (420 aa).

In terms of domain architecture, CARD spans 1 to 92; it reads MAAKRTHERD…QLSLQFPSDD (92 aa). Residues S85 and S90 each carry the phosphoserine modification. The disordered stretch occupies residues 93 to 115; sequence EEDELQKMFTPSSASESRGKVED. Active-site residues include H251 and C299.

It belongs to the peptidase C14A family. In terms of assembly, heterotetramer that consists of two anti-parallel arranged heterodimers, each one formed by two subunits (Potential). May interact with TRAF2.

Functionally, involved in the activation cascade of caspases responsible for apoptosis execution. This Rattus norvegicus (Rat) protein is Caspase-12 (Casp12).